A 232-amino-acid chain; its full sequence is Ribonuclease P protein component 3 (232 aa).

Belongs to the eukaryotic/archaeal RNase P protein component 3 family. As to quaternary structure, consists of a catalytic RNA component and at least 5 protein subunits.

The protein localises to the cytoplasm. The catalysed reaction is Endonucleolytic cleavage of RNA, removing 5'-extranucleotides from tRNA precursor.. Its function is as follows. Part of ribonuclease P, a protein complex that generates mature tRNA molecules by cleaving their 5'-ends. This Methanococcus maripaludis (strain DSM 14266 / JCM 13030 / NBRC 101832 / S2 / LL) protein is Ribonuclease P protein component 3.